Here is a 209-residue protein sequence, read N- to C-terminus: High frequency lysogenization protein HflD homolog (209 aa).

This sequence belongs to the HflD family.

It localises to the cytoplasm. The protein localises to the cell inner membrane. The chain is High frequency lysogenization protein HflD homolog from Sodalis glossinidius (strain morsitans).